Reading from the N-terminus, the 340-residue chain is Photosystem II protein D1 (340 aa).

Transmembrane regions (helical) follow at residues 25 to 42 (YIGW…LATV), 114 to 129 (HFFL…EWEF), and 138 to 152 (WIFV…AAAA). H114 contacts chlorophyll a. W122 serves as a coordination point for pheophytin a. Positions 166 and 185 each coordinate [CaMn4O5] cluster. The chain crosses the membrane as a helical span at residues 193–214 (FHILGVAGVFGGSLFSAMHGSL). H194 provides a ligand contact to chlorophyll a. A quinone is bound by residues H211 and 260–261 (SF). H211 provides a ligand contact to Fe cation. Position 268 (H268) interacts with Fe cation. A helical membrane pass occupies residues 270-284 (FLAAWPVIGIWFTSL). Residues H328, E329, D338, and A340 each coordinate [CaMn4O5] cluster.

This sequence belongs to the reaction center PufL/M/PsbA/D family. As to quaternary structure, PSII is composed of 1 copy each of membrane proteins PsbA, PsbB, PsbC, PsbD, PsbE, PsbF, PsbH, PsbI, PsbJ, PsbK, PsbL, PsbM, PsbT, PsbX, PsbY, PsbZ, Psb30/Ycf12, at least 3 peripheral proteins of the oxygen-evolving complex and a large number of cofactors. It forms dimeric complexes. The D1/D2 heterodimer binds P680, chlorophylls that are the primary electron donor of PSII, and subsequent electron acceptors. It shares a non-heme iron and each subunit binds pheophytin, quinone, additional chlorophylls, carotenoids and lipids. D1 provides most of the ligands for the Mn4-Ca-O5 cluster of the oxygen-evolving complex (OEC). There is also a Cl(-1) ion associated with D1 and D2, which is required for oxygen evolution. The PSII complex binds additional chlorophylls, carotenoids and specific lipids. serves as cofactor. In terms of processing, tyr-157 forms a radical intermediate that is referred to as redox-active TyrZ, YZ or Y-Z.

The protein resides in the plastid. It localises to the chloroplast thylakoid membrane. The enzyme catalyses 2 a plastoquinone + 4 hnu + 2 H2O = 2 a plastoquinol + O2. Photosystem II (PSII) is a light-driven water:plastoquinone oxidoreductase that uses light energy to abstract electrons from H(2)O, generating O(2) and a proton gradient subsequently used for ATP formation. It consists of a core antenna complex that captures photons, and an electron transfer chain that converts photonic excitation into a charge separation. The D1/D2 (PsbA/PsbD) reaction center heterodimer binds P680, the primary electron donor of PSII as well as several subsequent electron acceptors. In Amphidinium operculatum (Dinoflagellate), this protein is Photosystem II protein D1.